A 476-amino-acid chain; its full sequence is Serine/threonine-protein kinase Chk1 (476 aa).

The interaction with CLSPN stretch occupies residues 1 to 265 (MAVPFVEDWD…IPDIKKDRWY (265 aa)). In terms of domain architecture, Protein kinase spans 9–265 (WDLVQTLGEG…IPDIKKDRWY (257 aa)). ATP contacts are provided by residues 15-23 (LGEGAYGEV) and Lys38. Asp130 functions as the Proton acceptor in the catalytic mechanism. Residue Lys132 forms a Glycyl lysine isopeptide (Lys-Gly) (interchain with G-Cter in ubiquitin) linkage. Residues 267-331 (KPLNRGAKRP…RTGLSLWDTG (65 aa)) are disordered. The residue at position 280 (Ser280) is a Phosphoserine; by PKB/AKT1. The span at 280-291 (SGGMSESSSGFS) shows a compositional bias: low complexity. Phosphoserine occurs at positions 286, 296, and 301. The span at 298–320 (LDFSPVNNGSSEETVKFSSSQPE) shows a compositional bias: polar residues. Ser317 bears the Phosphoserine; by ATM and ATR mark. A Phosphoserine; by ATR modification is found at Ser345. The autoinhibitory region stretch occupies residues 391-476 (QCLKETFEKL…SSQKVWFPVT (86 aa)). A Glycyl lysine isopeptide (Lys-Gly) (interchain with G-Cter in ubiquitin) cross-link involves residue Lys436. Phosphoserine occurs at positions 463, 467, and 468.

Belongs to the protein kinase superfamily. CAMK Ser/Thr protein kinase family. NIM1 subfamily. Interacts (phosphorylated by ATR) with RAD51. Interacts with and phosphorylates CLSPN, an adapter protein that regulates the ATR-dependent phosphorylation of CHEK1. Interacts with BRCA1. Interacts with and phosphorylates CDC25A, CDC25B and CDC25C. Interacts with FBXO6, which regulates CHEK1. Interacts with PPM1D, which regulates CHEK1 through dephosphorylation. Interacts with TIMELESS; DNA damage-dependent. Interacts with FEM1B; activates CHEK1 in response to stress. Interacts with TLK1. Interacts with XPO1 and YWHAZ. Interacts with CDK5RAP3; antagonizes CHEK1. Post-translationally, phosphorylated by ATR in a RAD17-dependent manner in response to ultraviolet irradiation and inhibition of DNA replication. Phosphorylated by ATM in response to ionizing irradiation. ATM and ATR can both phosphorylate Ser-317 and Ser-345 and this results in enhanced kinase activity. Phosphorylation at Ser-345 induces a change in the conformation of the protein, activates the kinase activity and is a prerequisite for interaction with FBXO6 and subsequent ubiquitination at Lys-436. Phosphorylation at Ser-345 also increases binding to 14-3-3 proteins and promotes nuclear retention. Conversely, dephosphorylation at Ser-345 by PPM1D may contribute to exit from checkpoint mediated cell cycle arrest. Phosphorylation at Ser-280 by AKT1/PKB, may promote mono and/or diubiquitination. Also phosphorylated at undefined residues during mitotic arrest, resulting in decreased activity. In terms of processing, ubiquitinated. Mono or diubiquitination promotes nuclear exclusion. The activated form (phosphorylated on Ser-345) is polyubiquitinated at Lys-436 by some SCF-type E3 ubiquitin ligase complex containing FBXO6 promoting its degradation. Ubiquitination and degradation are required to terminate the checkpoint and ensure that activated CHEK1 does not accumulate as cells progress through S phase, when replication forks encounter transient impediments during normal DNA replication. 'Lys-63'-mediated ubiquitination by TRAF4 at Lys-132 activates cell cycle arrest and activation of DNA repair. Proteolytically cleaved at the C-terminus by SPRTN during normal DNA replication, thereby promoting CHEK1 removal from chromatin and activating the protein kinase activity. In terms of tissue distribution, found in all adult tissues tested. Elevated expression in testis, lung and spleen. 15.5 day old embryos show ubiquitous expression with strong expression in brain, liver, kidney, pancreas, intestine, thymus and lung.

Its subcellular location is the nucleus. The protein localises to the chromosome. It is found in the cytoplasm. The protein resides in the cytoskeleton. It localises to the microtubule organizing center. Its subcellular location is the centrosome. It catalyses the reaction L-seryl-[protein] + ATP = O-phospho-L-seryl-[protein] + ADP + H(+). The catalysed reaction is L-threonyl-[protein] + ATP = O-phospho-L-threonyl-[protein] + ADP + H(+). Activated through phosphorylation predominantly by ATR but also by ATM in response to DNA damage or inhibition of DNA replication. Activation is modulated by several mediators including CLSPN, BRCA1 and FEM1B. Proteolytic cleavage at the C-terminus by SPRTN during normal DNA replication activates the protein kinase activity. Its function is as follows. Serine/threonine-protein kinase which is required for checkpoint-mediated cell cycle arrest and activation of DNA repair in response to the presence of DNA damage or unreplicated DNA. May also negatively regulate cell cycle progression during unperturbed cell cycles. This regulation is achieved by a number of mechanisms that together help to preserve the integrity of the genome. Recognizes the substrate consensus sequence [R-X-X-S/T]. Binds to and phosphorylates CDC25A, CDC25B and CDC25C. Phosphorylation of CDC25A at 'Ser-178' and 'Thr-507' and phosphorylation of CDC25C at 'Ser-216' creates binding sites for 14-3-3 proteins which inhibit CDC25A and CDC25C. Phosphorylation of CDC25A at 'Ser-76', 'Ser-124', 'Ser-178', 'Ser-279' and 'Ser-293' promotes proteolysis of CDC25A. Phosphorylation of CDC25A at 'Ser-76' primes the protein for subsequent phosphorylation at 'Ser-79', 'Ser-82' and 'Ser-88' by NEK11, which is required for polyubiquitination and degradation of CDCD25A. Inhibition of CDC25 leads to increased inhibitory tyrosine phosphorylation of CDK-cyclin complexes and blocks cell cycle progression. Also phosphorylates NEK6. Binds to and phosphorylates RAD51 at 'Thr-309', which promotes the release of RAD51 from BRCA2 and enhances the association of RAD51 with chromatin, thereby promoting DNA repair by homologous recombination. Phosphorylates multiple sites within the C-terminus of TP53, which promotes activation of TP53 by acetylation and promotes cell cycle arrest and suppression of cellular proliferation. Also promotes repair of DNA cross-links through phosphorylation of FANCE. Binds to and phosphorylates TLK1 at 'Ser-743', which prevents the TLK1-dependent phosphorylation of the chromatin assembly factor ASF1A. This may enhance chromatin assembly both in the presence or absence of DNA damage. May also play a role in replication fork maintenance through regulation of PCNA. May regulate the transcription of genes that regulate cell-cycle progression through the phosphorylation of histones. Phosphorylates histone H3.1 (to form H3T11ph), which leads to epigenetic inhibition of a subset of genes. May also phosphorylate RB1 to promote its interaction with the E2F family of transcription factors and subsequent cell cycle arrest. Phosphorylates SPRTN, promoting SPRTN recruitment to chromatin. Reduces replication stress and activates the G2/M checkpoint, by phosphorylating and inactivating PABIR1/FAM122A and promoting the serine/threonine-protein phosphatase 2A-mediated dephosphorylation and stabilization of WEE1 levels and activity. This Mus musculus (Mouse) protein is Serine/threonine-protein kinase Chk1 (Chek1).